The sequence spans 102 residues: Large ribosomal subunit protein uL24 (102 aa).

The protein belongs to the universal ribosomal protein uL24 family. Part of the 50S ribosomal subunit.

Its function is as follows. One of two assembly initiator proteins, it binds directly to the 5'-end of the 23S rRNA, where it nucleates assembly of the 50S subunit. Functionally, one of the proteins that surrounds the polypeptide exit tunnel on the outside of the subunit. This Limosilactobacillus fermentum (strain NBRC 3956 / LMG 18251) (Lactobacillus fermentum) protein is Large ribosomal subunit protein uL24.